The primary structure comprises 181 residues: Oligoribonuclease (181 aa).

Residues 8–171 (LIWIDLEMTG…DDIRESVAEL (164 aa)) enclose the Exonuclease domain. Tyr-129 is an active-site residue.

It belongs to the oligoribonuclease family. Homodimer.

It localises to the cytoplasm. In terms of biological role, 3'-to-5' exoribonuclease specific for small oligoribonucleotides. The sequence is that of Oligoribonuclease from Escherichia coli O157:H7.